The primary structure comprises 131 residues: Histone H3-like 4 (131 aa).

K10 carries the N6,N6,N6-trimethyllysine; alternate modification. K10 is modified (N6,N6-dimethyllysine; alternate). K10 is subject to N6-acetyllysine; alternate. The residue at position 10 (K10) is an N6-methyllysine; alternate. At T12 the chain carries Phosphothreonine. K15 carries the N6-acetyllysine modification. A Phosphoserine modification is found at S27. K32 carries the N6,N6,N6-trimethyllysine; alternate modification. K32 is subject to N6,N6-dimethyllysine; alternate. An N6-methyllysine; alternate modification is found at K32.

It belongs to the histone H3 family. The nucleosome is a histone octamer containing two molecules each of H2A, H2B, H3 and H4 assembled in one H3-H4 heterotetramer and two H2A-H2B heterodimers. The octamer wraps approximately 147 bp of DNA. Expressed in roots, seedlings, leaves buds and open flowers.

The protein resides in the nucleus. It localises to the chromosome. Its function is as follows. Core component of nucleosome. Nucleosomes wrap and compact DNA into chromatin, limiting DNA accessibility to the cellular machineries which require DNA as a template. Histones thereby play a central role in transcription regulation, DNA repair, DNA replication and chromosomal stability. DNA accessibility is regulated via a complex set of post-translational modifications of histones, also called histone code, and nucleosome remodeling. The protein is Histone H3-like 4 of Arabidopsis thaliana (Mouse-ear cress).